A 142-amino-acid polypeptide reads, in one-letter code: Hemoglobin subunit theta-1 (142 aa).

The Globin domain maps to 2–142 (ALSAEDRALV…VISALVSEYR (141 aa)). 2 residues coordinate heme b: histidine 59 and histidine 88.

This sequence belongs to the globin family.

The polypeptide is Hemoglobin subunit theta-1 (HBQ1) (Homo sapiens (Human)).